The primary structure comprises 228 residues: Vacuolar-sorting protein snf7 (228 aa).

Coiled coils occupy residues 25 to 94 (ILGL…QINA) and 125 to 226 (EKVD…QAEM).

It belongs to the SNF7 family. As to quaternary structure, a component of the endosomal sorting required for transport complex III (ESCRT-III).

The protein localises to the cytoplasm. The protein resides in the endosome membrane. Required for the sorting and concentration of proteins resulting in the entry of these proteins into the invaginating vesicles of the multivesicular body (MVB). Also required for the proteolytic cleavage of the transcription factor pacc-1 in response to alkaline ambient pH. This Neurospora crassa (strain ATCC 24698 / 74-OR23-1A / CBS 708.71 / DSM 1257 / FGSC 987) protein is Vacuolar-sorting protein snf7 (vsp-3).